Reading from the N-terminus, the 163-residue chain is Transcriptional repressor NrdR (163 aa).

A zinc finger lies at 3-34; it reads CPFCAYADTRVVDSRLADDGGSVRRRRECPQC. The 91-residue stretch at 49–139 folds into the ATP-cone domain; that stretch reads PVVVKTDGRR…VYRRFEDVDA (91 aa).

This sequence belongs to the NrdR family. Zn(2+) serves as cofactor.

Its function is as follows. Negatively regulates transcription of bacterial ribonucleotide reductase nrd genes and operons by binding to NrdR-boxes. This is Transcriptional repressor NrdR from Acidithiobacillus ferrooxidans (strain ATCC 23270 / DSM 14882 / CIP 104768 / NCIMB 8455) (Ferrobacillus ferrooxidans (strain ATCC 23270)).